Here is a 181-residue protein sequence, read N- to C-terminus: K99 fimbrial protein (181 aa).

The N-terminal stretch at 1–22 is a signal peptide; it reads MKKTLLAIILGGMAFATTNASA. A disulfide bridge links C38 with C79.

The protein belongs to the fimbrial protein family.

The protein resides in the fimbrium. Fimbriae (also called pili), polar filaments radiating from the surface of the bacterium to a length of 0.5-1.5 micrometers and numbering 100-300 per cell, enable bacteria to colonize the epithelium of specific host organs. In terms of biological role, fanC is the main component of the K99 fimbriae. The protein is K99 fimbrial protein (fanC) of Escherichia coli.